We begin with the raw amino-acid sequence, 315 residues long: Mycothiol acetyltransferase (315 aa).

N-acetyltransferase domains lie at 4–141 (LDWR…RPLR) and 152–315 (VVIR…GTDN). Residue glutamate 36 coordinates 1D-myo-inositol 2-(L-cysteinylamino)-2-deoxy-alpha-D-glucopyranoside. Residues 80-82 (LVV) and 88-93 (RRGIGT) contribute to the acetyl-CoA site. 1D-myo-inositol 2-(L-cysteinylamino)-2-deoxy-alpha-D-glucopyranoside-binding residues include glutamate 179, lysine 224, and glutamate 234. Acetyl-CoA contacts are provided by residues 238-240 (LGV) and 245-251 (QRRGLGQ). Tyrosine 282 lines the 1D-myo-inositol 2-(L-cysteinylamino)-2-deoxy-alpha-D-glucopyranoside pocket. 287 to 292 (NVAAVR) lines the acetyl-CoA pocket.

It belongs to the acetyltransferase family. MshD subfamily. As to quaternary structure, monomer.

It carries out the reaction 1D-myo-inositol 2-(L-cysteinylamino)-2-deoxy-alpha-D-glucopyranoside + acetyl-CoA = mycothiol + CoA + H(+). In terms of biological role, catalyzes the transfer of acetyl from acetyl-CoA to desacetylmycothiol (Cys-GlcN-Ins) to form mycothiol. This chain is Mycothiol acetyltransferase, found in Mycobacterium bovis (strain ATCC BAA-935 / AF2122/97).